Consider the following 146-residue polypeptide: Ribosome maturation factor RimP (146 aa).

It belongs to the RimP family.

The protein resides in the cytoplasm. Its function is as follows. Required for maturation of 30S ribosomal subunits. The polypeptide is Ribosome maturation factor RimP (Helicobacter pylori (strain G27)).